Here is a 728-residue protein sequence, read N- to C-terminus: Homoaconitase, mitochondrial (728 aa).

The transit peptide at 1 to 24 (MVAIPRLARLSVPAWALSARGRFY) directs the protein to the mitochondrion. Cys362, Cys422, and Cys425 together coordinate [4Fe-4S] cluster.

The protein belongs to the aconitase/IPM isomerase family. [4Fe-4S] cluster is required as a cofactor.

The protein resides in the mitochondrion. The enzyme catalyses (2R,3S)-homoisocitrate = cis-homoaconitate + H2O. It functions in the pathway amino-acid biosynthesis; L-lysine biosynthesis via AAA pathway; L-alpha-aminoadipate from 2-oxoglutarate: step 3/5. Its function is as follows. Catalyzes the reversible hydration of cis-homoaconitate to (2R,3S)-homoisocitrate, a step in the alpha-aminoadipate pathway for lysine biosynthesis. This is Homoaconitase, mitochondrial (LYS4) from Cryptococcus neoformans var. neoformans serotype D (strain JEC21 / ATCC MYA-565) (Filobasidiella neoformans).